The primary structure comprises 254 residues: Imidazole glycerol phosphate synthase subunit HisF (254 aa).

Residues Asp11 and Asp130 contribute to the active site.

Belongs to the HisA/HisF family. As to quaternary structure, heterodimer of HisH and HisF.

It is found in the cytoplasm. The enzyme catalyses 5-[(5-phospho-1-deoxy-D-ribulos-1-ylimino)methylamino]-1-(5-phospho-beta-D-ribosyl)imidazole-4-carboxamide + L-glutamine = D-erythro-1-(imidazol-4-yl)glycerol 3-phosphate + 5-amino-1-(5-phospho-beta-D-ribosyl)imidazole-4-carboxamide + L-glutamate + H(+). It participates in amino-acid biosynthesis; L-histidine biosynthesis; L-histidine from 5-phospho-alpha-D-ribose 1-diphosphate: step 5/9. In terms of biological role, IGPS catalyzes the conversion of PRFAR and glutamine to IGP, AICAR and glutamate. The HisF subunit catalyzes the cyclization activity that produces IGP and AICAR from PRFAR using the ammonia provided by the HisH subunit. This is Imidazole glycerol phosphate synthase subunit HisF from Solibacter usitatus (strain Ellin6076).